Here is a 106-residue protein sequence, read N- to C-terminus: UPF0091 protein RP266 (106 aa).

It belongs to the UPF0091 family.

This Rickettsia prowazekii (strain Madrid E) protein is UPF0091 protein RP266.